Consider the following 133-residue polypeptide: Small ribosomal subunit protein uS8 (133 aa).

Belongs to the universal ribosomal protein uS8 family. As to quaternary structure, part of the 30S ribosomal subunit. Contacts proteins S5 and S12.

Functionally, one of the primary rRNA binding proteins, it binds directly to 16S rRNA central domain where it helps coordinate assembly of the platform of the 30S subunit. This chain is Small ribosomal subunit protein uS8, found in Amoebophilus asiaticus (strain 5a2).